The chain runs to 794 residues: Zinc finger protein 148 (794 aa).

A Glycyl lysine isopeptide (Lys-Gly) (interchain with G-Cter in SUMO2) cross-link involves residue lysine 6. A Phosphoserine modification is found at serine 51. Glycyl lysine isopeptide (Lys-Gly) (interchain with G-Cter in SUMO2) cross-links involve residues lysine 88, lysine 115, and lysine 132. The C2H2-type 1 zinc finger occupies 171-193 (HVCEHCNAAFRTNYHLQRHVFIH). Position 194 is a phosphothreonine (threonine 194). 2 C2H2-type zinc fingers span residues 199–221 (FQCSQCDMRFIQKYLLQRHEKIH) and 227–249 (FRCDECGMRFIQKYHMERHKRTH). A Phosphoserine modification is found at serine 250. The segment at 255 to 278 (YQCEYCLQYFSRTDRVLKHKRMCH) adopts a C2H2-type 4 zinc-finger fold. Lysine 291 is covalently cross-linked (Glycyl lysine isopeptide (Lys-Gly) (interchain with G-Cter in SUMO2)). The tract at residues 298–336 (EEDSGFSTSPKDNSLPKKKRQKTEKKSSGMDKESVLDKS) is disordered. 2 positions are modified to phosphoserine: serine 301 and serine 306. Lysine 308 is covalently cross-linked (Glycyl lysine isopeptide (Lys-Gly) (interchain with G-Cter in SUMO2)). The segment covering 321–336 (EKKSSGMDKESVLDKS) has biased composition (basic and acidic residues). Lysine 356 is covalently cross-linked (Glycyl lysine isopeptide (Lys-Gly) (interchain with G-Cter in SUMO1); alternate). A Glycyl lysine isopeptide (Lys-Gly) (interchain with G-Cter in SUMO2); alternate cross-link involves residue lysine 356. Residue lysine 402 forms a Glycyl lysine isopeptide (Lys-Gly) (interchain with G-Cter in SUMO2) linkage. At serine 412 the chain carries Phosphoserine. Glycyl lysine isopeptide (Lys-Gly) (interchain with G-Cter in SUMO2) cross-links involve residues lysine 421 and lysine 424. The segment covering 574 to 588 (NSSDVPEVTQSENVG) has biased composition (polar residues). The disordered stretch occupies residues 574 to 599 (NSSDVPEVTQSENVGSSSQASSSDKA). Lysine 607 is modified (N6-acetyllysine). 2 positions are modified to phosphoserine: serine 665 and serine 784.

Belongs to the krueppel C2H2-type zinc-finger protein family. As to quaternary structure, interacts with HNRNPDL. Interacts with the 5FMC complex; the interaction requires association with CHTOP. Interacts with CAVIN1. In terms of processing, sumoylated with SUMO2. Desumoylated by SENP3, resulting in the stimulation of transcription of its target genes. Strong expression detected in brain, lung, liver and kidney, with lower levels detected in spleen, skeletal muscle, testis and heart.

The protein resides in the nucleus. Its function is as follows. Involved in transcriptional regulation. Represses the transcription of a number of genes including gastrin, stromelysin and enolase. Binds to the G-rich box in the enhancer region of these genes. The chain is Zinc finger protein 148 (Znf148) from Mus musculus (Mouse).